The chain runs to 449 residues: Ktr system potassium uptake protein D (449 aa).

10 helical membrane passes run 17 to 37, 46 to 66, 75 to 95, 133 to 153, 194 to 214, 235 to 255, 297 to 317, 355 to 375, 380 to 400, and 411 to 431; these read LIAL…SLPA, TFID…LTVV, IGIF…MTLG, VLFL…TYFL, FVQF…PVLV, ITTI…FALE, LFFI…GGGI, LVVT…LTIT, LLEL…SLGI, and VIMI…YLIG.

The protein belongs to the TrkH potassium transport family. Ktr (TC 2.A.38.4) subfamily. In terms of assembly, homodimer. Part of the KtrCD complex formed by an octameric catalytic ring of KtrC and a membrane associated dimer of KtrD forming a potassium channel.

The protein localises to the cell membrane. Integral membrane subunit of the KtrCD potassium uptake transporter. The 2 major potassium transporter complexes KtrAB and KtrCD confer resistance to both suddenly imposed and prolonged osmotic stress. The polypeptide is Ktr system potassium uptake protein D (ktrD) (Bacillus subtilis (strain 168)).